A 386-amino-acid polypeptide reads, in one-letter code: Succinate--CoA ligase [ADP-forming] subunit beta (386 aa).

Residues 9–244 form the ATP-grasp domain; that stretch reads KELLREFGVA…TTEEDPREVE (236 aa). ATP-binding positions include Lys-46, 53 to 55, Glu-99, Ser-102, and Glu-107; that span reads GRG. Residues Asn-199 and Asp-213 each coordinate Mg(2+). Substrate is bound by residues Asn-264 and 321 to 323; that span reads GIM.

This sequence belongs to the succinate/malate CoA ligase beta subunit family. Heterotetramer of two alpha and two beta subunits. Mg(2+) is required as a cofactor.

The enzyme catalyses succinate + ATP + CoA = succinyl-CoA + ADP + phosphate. The catalysed reaction is GTP + succinate + CoA = succinyl-CoA + GDP + phosphate. The protein operates within carbohydrate metabolism; tricarboxylic acid cycle; succinate from succinyl-CoA (ligase route): step 1/1. Functionally, succinyl-CoA synthetase functions in the citric acid cycle (TCA), coupling the hydrolysis of succinyl-CoA to the synthesis of either ATP or GTP and thus represents the only step of substrate-level phosphorylation in the TCA. The beta subunit provides nucleotide specificity of the enzyme and binds the substrate succinate, while the binding sites for coenzyme A and phosphate are found in the alpha subunit. The polypeptide is Succinate--CoA ligase [ADP-forming] subunit beta (Exiguobacterium sp. (strain ATCC BAA-1283 / AT1b)).